Consider the following 468-residue polypeptide: Dimethylamine methyltransferase MtbB1 (468 aa).

Pyrrolysine 356 is a non-standard amino acid (pyrrolysine).

The protein belongs to the dimethylamine methyltransferase family.

It catalyses the reaction Co(I)-[dimethylamine-specific corrinoid protein] + dimethylamine + H(+) = methyl-Co(III)-[dimethylamine-specific corrinoid protein] + methylamine. The protein operates within one-carbon metabolism; methanogenesis from dimethylamine. Catalyzes the transfer of a methyl group from dimethylamine to the corrinoid cofactor of MtbC. The chain is Dimethylamine methyltransferase MtbB1 (mtbB1) from Methanosarcina mazei (strain ATCC BAA-159 / DSM 3647 / Goe1 / Go1 / JCM 11833 / OCM 88) (Methanosarcina frisia).